A 121-amino-acid polypeptide reads, in one-letter code: Large ribosomal subunit protein bL19 (121 aa).

The protein belongs to the bacterial ribosomal protein bL19 family.

Functionally, this protein is located at the 30S-50S ribosomal subunit interface and may play a role in the structure and function of the aminoacyl-tRNA binding site. The polypeptide is Large ribosomal subunit protein bL19 (Symbiobacterium thermophilum (strain DSM 24528 / JCM 14929 / IAM 14863 / T)).